A 390-amino-acid chain; its full sequence is Cell division protein FtsZ (390 aa).

GTP is bound by residues 20–24, 106–108, glutamate 137, arginine 141, and aspartate 184; these read GGGNN and GTG.

It belongs to the FtsZ family. Homodimer. Polymerizes to form a dynamic ring structure in a strictly GTP-dependent manner. Interacts directly with several other division proteins.

The protein resides in the cytoplasm. In terms of biological role, essential cell division protein that forms a contractile ring structure (Z ring) at the future cell division site. The regulation of the ring assembly controls the timing and the location of cell division. One of the functions of the FtsZ ring is to recruit other cell division proteins to the septum to produce a new cell wall between the dividing cells. Binds GTP and shows GTPase activity. The chain is Cell division protein FtsZ from Mycoplasmopsis pulmonis (strain UAB CTIP) (Mycoplasma pulmonis).